Reading from the N-terminus, the 810-residue chain is MSSAVVASSTTFLVALASSASRGGPRRGRVVGVAAPPALLYDGRAGRLALRAPPPPRPRPRRRDAGVVRRADDGENEAAVERAGEDDEEEEEFSSGAWQPPRSRRGGVGKVLKRRGTVPPVGRYGSGGDAARVRGAAAPAPAPTQDAASSKNGALLSGRDDDTPASRNGSVVTGADKPAAATPPVTITKLPAPDSPVILPSVDKPQPEFVIPDATAPAPPPPGSNPRSSAPLPKPDNSEFAEDKSAKVVESAPKPKATRSSPIPAVEEETWDFKKYFDLNEPDAAEDGDDDDDWADSDASDSEIDQDDDSGPLAGENVMNVIVVAAECSPWCKTGGLGDVAGALPKALARRGHRVMVVVPRYGDYAEAQDVGIRKYYKAAGQDLEVKYFHAFIDGVDFVFIDAPLFRHRQDDIYGGNRQEIMKRMILFCKAAVEVPWHVPCGGVPYGDGNLVFLANDWHTALLPVYLKAYYRDNGMMQYTRSVLVIHNIAYQGRGPVDEFPYMELPEHYLDHFKLYDPVGGEHANIFGAGLKMADRVVTVSPGYLWELKTTEGGWGLHDIIRENDWKMNGIVNGIDYREWNPEVDVHLQSDGYANYTVASLDSGKPRCKAALQRELGLEVRDDVPLIGFIGRLDGQKGVDIIGDAMPWIAGQDVQLVLLGSGRRDLEVMLQRFEAQHNSKVRGWVGFSVKMAHRITAGADVLVMPSRFEPCGLNQLYAMAYGTVPVVHAVGGLRDTVSAFDPFEDTGLGWTFDRAEPHKLIEALGHCLETYRKYKESWRGLQVRGMSQDLSWDHAAELYEEVLVKAKYQW.

A chloroplast-targeting transit peptide spans 1–16 (MSSAVVASSTTFLVAL). Disordered stretches follow at residues 43–265 (GRAG…PIPA) and 281–313 (EPDA…SGPL). The segment covering 63–83 (RDAGVVRRADDGENEAAVERA) has biased composition (basic and acidic residues). Residues 84-93 (GEDDEEEEEF) are compositionally biased toward acidic residues. Positions 102–116 (RSRRGGVGKVLKRRG) are enriched in basic residues. Residues 129–148 (DAARVRGAAAPAPAPTQDAA) show a composition bias toward low complexity. Over residues 281–310 (EPDAAEDGDDDDDWADSDASDSEIDQDDDS) the composition is skewed to acidic residues. Lysine 333 contacts ADP-alpha-D-glucose.

It belongs to the glycosyltransferase 1 family. Bacterial/plant glycogen synthase subfamily. As to expression, expressed most exclusively in endosperm.

The protein localises to the plastid. The protein resides in the amyloplast. It is found in the chloroplast. It catalyses the reaction [(1-&gt;4)-alpha-D-glucosyl](n) + ADP-alpha-D-glucose = [(1-&gt;4)-alpha-D-glucosyl](n+1) + ADP + H(+). The protein operates within glycan biosynthesis; starch biosynthesis. In terms of biological role, plays an important role during endosperm starch synthesis. Determines the type of amylopectin structure of starch grain. Synthesizes long B1 amylopectin chains by elongating short A and B1 chains, independently of the other soluble starch synthases. Barely active in japonica subspecies. The polypeptide is Soluble starch synthase 2-3, chloroplastic/amyloplastic (SSII-3) (Oryza sativa subsp. indica (Rice)).